The primary structure comprises 280 residues: Ribosomal RNA small subunit methyltransferase A (280 aa).

The S-adenosyl-L-methionine site is built by N11, L13, G37, E57, D85, and N106.

Belongs to the class I-like SAM-binding methyltransferase superfamily. rRNA adenine N(6)-methyltransferase family. RsmA subfamily.

It localises to the cytoplasm. The catalysed reaction is adenosine(1518)/adenosine(1519) in 16S rRNA + 4 S-adenosyl-L-methionine = N(6)-dimethyladenosine(1518)/N(6)-dimethyladenosine(1519) in 16S rRNA + 4 S-adenosyl-L-homocysteine + 4 H(+). Functionally, specifically dimethylates two adjacent adenosines (A1518 and A1519) in the loop of a conserved hairpin near the 3'-end of 16S rRNA in the 30S particle. May play a critical role in biogenesis of 30S subunits. In Campylobacter concisus (strain 13826), this protein is Ribosomal RNA small subunit methyltransferase A.